The sequence spans 212 residues: Holliday junction branch migration complex subunit RuvA (212 aa).

The segment at 1–70 (MISYLKGSPI…EDQQILYGFS (70 aa)) is domain I. The tract at residues 71–149 (TTAERELFRQ…QWRKMVGVTV (79 aa)) is domain II. The segment at 150–160 (TSSAAMPSLEI) is flexible linker. Positions 160–212 (ILEDIEMTLLALGYTNEEINKAISTLSQDNLMLKNTNTEEWIKEAIAWLSQGT) are domain III.

It belongs to the RuvA family. Homotetramer. Forms an RuvA(8)-RuvB(12)-Holliday junction (HJ) complex. HJ DNA is sandwiched between 2 RuvA tetramers; dsDNA enters through RuvA and exits via RuvB. An RuvB hexamer assembles on each DNA strand where it exits the tetramer. Each RuvB hexamer is contacted by two RuvA subunits (via domain III) on 2 adjacent RuvB subunits; this complex drives branch migration. In the full resolvosome a probable DNA-RuvA(4)-RuvB(12)-RuvC(2) complex forms which resolves the HJ.

The protein localises to the cytoplasm. Its function is as follows. The RuvA-RuvB-RuvC complex processes Holliday junction (HJ) DNA during genetic recombination and DNA repair, while the RuvA-RuvB complex plays an important role in the rescue of blocked DNA replication forks via replication fork reversal (RFR). RuvA specifically binds to HJ cruciform DNA, conferring on it an open structure. The RuvB hexamer acts as an ATP-dependent pump, pulling dsDNA into and through the RuvAB complex. HJ branch migration allows RuvC to scan DNA until it finds its consensus sequence, where it cleaves and resolves the cruciform DNA. This is Holliday junction branch migration complex subunit RuvA from Crocosphaera subtropica (strain ATCC 51142 / BH68) (Cyanothece sp. (strain ATCC 51142)).